We begin with the raw amino-acid sequence, 346 residues long: Cyclin-dependent kinase 20 (346 aa).

The Protein kinase domain maps to 4-288 (YCILGRIGEG…ASQALLHQYF (285 aa)). ATP contacts are provided by residues 10-18 (IGEGAHGIV) and lysine 33. The active-site Proton acceptor is the aspartate 127. The tract at residues 298–324 (SELPIPQRPGGPAPKAHPGPPHVHDFH) is disordered. Residues 303–318 (PQRPGGPAPKAHPGPP) show a composition bias toward pro residues.

It belongs to the protein kinase superfamily. CMGC Ser/Thr protein kinase family. CDC2/CDKX subfamily. In terms of assembly, monomer. Interacts with MAK. Interacts with TBC1D32.

The protein localises to the nucleus. It is found in the cytoplasm. The protein resides in the cell projection. It localises to the cilium. It catalyses the reaction L-seryl-[protein] + ATP = O-phospho-L-seryl-[protein] + ADP + H(+). The catalysed reaction is L-threonyl-[protein] + ATP = O-phospho-L-threonyl-[protein] + ADP + H(+). Functionally, involved in cell growth. Activates CDK2, a kinase involved in the control of the cell cycle, by phosphorylating residue 'Thr-160'. Required for high-level Shh responses in the developing neural tube. Together with TBC1D32, controls the structure of the primary cilium by coordinating assembly of the ciliary membrane and axoneme, allowing GLI2 to be properly activated in response to SHH signaling. This chain is Cyclin-dependent kinase 20 (Cdk20), found in Mus musculus (Mouse).